The following is a 538-amino-acid chain: Ubiquitin domain-containing protein DSK2a (538 aa).

Residues 18–93 enclose the Ubiquitin-like domain; it reads VAVNVRCSNG…VHMVRGFVPS (76 aa). A disordered region spans residues 95–120; that stretch reads PSAPAANAGNQTTAPQAVGSNDSSNL. The segment covering 102 to 119 has biased composition (polar residues); sequence AGNQTTAPQAVGSNDSSN. 2 STI1 domains span residues 138 to 179 and 192 to 231; these read GNAM…QNLM and NPQMRELVDRNPELGHVLNDPSILRQTLEAARNPELMREM. Residues 289–316 are disordered; sequence QGVTTQGSDTSNNISAPNAETGTPNANP. STI1 domains are found at residues 357–394 and 398–433; these read SPLGATPDASQLSQILQNPAMSQMMQSVLSNPQYMNQL and NPQLRSMLDMNPQLREMMQNPDFLRQFSSPEMMQQM. Positions 491–535 constitute a UBA domain; the sequence is PPEERFATQLQQLQEMGFYDRAENIRALLATNGNVNAAVERLLGS.

As to quaternary structure, interacts with 'Lys-48'-linked polyubiquitin chains via its UBA domain. Interacts with RPN10 and RPN13. Interacts with PEX2 and PEX12. As to expression, ubiquitous with a strong expression level in inflorescence.

Its subcellular location is the nucleus. It is found in the cytoplasm. In terms of biological role, binds and presumably selects ubiquitin-conjugates for destruction. Prefers multiubiquitin chains rather than single ubiquitins, with a binding affinity for 'Lys-48'-linked ubiquitin chains. Acts as a ubiquitin receptor that associates with the 26S proteasomal docking subunit RPN10 for the indirect recognition of ubiquitinated substrates of ubiquitin/26S proteasome-mediated proteolysis (UPP). This is Ubiquitin domain-containing protein DSK2a (DSK2A) from Arabidopsis thaliana (Mouse-ear cress).